The chain runs to 829 residues: Transcription activator GutR (829 aa).

The segment at residues 42–61 (IDKIALQLGVSPNTIKSWIG) is a DNA-binding region (H-T-H motif). 200–207 (GWAGMGKT) is a binding site for ATP. 3 TPR repeats span residues 697-730 (HRVLLVRGDLSFARGYHVEAIQLYEAANEISSTY), 736-769 (IEAYFNLGVAYVKCDQFEKAEEAFEQMLYDKHNA), and 775-808 (IYYHYGMAQLLYRKGEKTKAVESNQKAIRLIDSW).

Activator of the glucitol dehydrogenase gene (gutB). The sequence is that of Transcription activator GutR (gutR) from Bacillus subtilis (strain 168).